Reading from the N-terminus, the 334-residue chain is MAVVLDLLNNDTRPKVEAPARPRHPEKAHRPDTAIQRKPDWIRVKAPGSKLWAETKDIVRANNLVTVCEEAGCPNIGECWEKRHATFMIMGDTCTRACAFCNVRTGLPESLDAAEPEKVADAVAKLGLHHVVVTSVDRDDLKDGGAEHFSRTIAAIRRASPGTTVEILTPDFLRKPGALEVVVAAKPDVFNHNLETVPGKYVTVRPGARYFHSVRLLQRVKELDPTIFTKSGIMVGLGEERNEVVQLMDDLRSAEVDFLTIGQYLQPTRKHHEVVRFVPPDEFKAYETTAYAKGFLLVSATPLTRSSHHAGEDFARLKAARLAKLGPAPVAVNA.

Residues 8–33 (LNNDTRPKVEAPARPRHPEKAHRPDT) are disordered. The segment covering 12 to 33 (TRPKVEAPARPRHPEKAHRPDT) has biased composition (basic and acidic residues). [4Fe-4S] cluster-binding residues include Cys68, Cys73, Cys79, Cys94, Cys98, Cys101, and Ser307. In terms of domain architecture, Radical SAM core spans 80 to 296 (WEKRHATFMI…ETTAYAKGFL (217 aa)).

This sequence belongs to the radical SAM superfamily. Lipoyl synthase family. It depends on [4Fe-4S] cluster as a cofactor.

The protein localises to the cytoplasm. It carries out the reaction [[Fe-S] cluster scaffold protein carrying a second [4Fe-4S](2+) cluster] + N(6)-octanoyl-L-lysyl-[protein] + 2 oxidized [2Fe-2S]-[ferredoxin] + 2 S-adenosyl-L-methionine + 4 H(+) = [[Fe-S] cluster scaffold protein] + N(6)-[(R)-dihydrolipoyl]-L-lysyl-[protein] + 4 Fe(3+) + 2 hydrogen sulfide + 2 5'-deoxyadenosine + 2 L-methionine + 2 reduced [2Fe-2S]-[ferredoxin]. The protein operates within protein modification; protein lipoylation via endogenous pathway; protein N(6)-(lipoyl)lysine from octanoyl-[acyl-carrier-protein]: step 2/2. In terms of biological role, catalyzes the radical-mediated insertion of two sulfur atoms into the C-6 and C-8 positions of the octanoyl moiety bound to the lipoyl domains of lipoate-dependent enzymes, thereby converting the octanoylated domains into lipoylated derivatives. This is Lipoyl synthase from Methylorubrum populi (strain ATCC BAA-705 / NCIMB 13946 / BJ001) (Methylobacterium populi).